We begin with the raw amino-acid sequence, 314 residues long: Protein SPOROCYTELESS (314 aa).

A compositionally biased stretch (polar residues) spans 1–17 (MATSLFFMSTDQNSVGN). Disordered stretches follow at residues 1–20 (MATS…NPND) and 33–62 (GEIR…PTLR). The SPL motif lies at 62–70 (RGMGVAKLE). The short motif at 308-314 (IDLSLKL) is the EAR element.

The protein belongs to the NOZZLE family. In terms of assembly, homodimer and heterodimer with SPEARs. Interacts in vitro with YAB1, YAB3 and YAB4. Interacts (via EAR motif) with TPL, TPR1, TPR2, TPR3 and TPR4. Interacts with SPEAR1, SPEAR2, SPEAR3, SPEAR4, TCP1, TCP6, TCP8, TCP9, TCP11, TCP15, TCP20, TCP21 and TCP23. Interacts with TCP2, TCP3, TCP4, TCP5, TCP10, TCP13, TCP17 and TCP24. Expressed in flower buds. Not found in leaves, siliques and stems. Detected in rosette leaves, stem tissue and seedlings.

The protein resides in the nucleus. Functionally, transcriptional regulator of sporocyte development. Acts as an adapter-like transcriptional repressor recruiting TPL/TPR corepressors to inhibit TCP transcription factors. Required for nucellus and embryo sac development. Plays a central role in patterning both the proximal-distal and the adaxial-abaxial axes during ovule development. Involved in establishing the prospective chalaza of the ovule and in controlling the cell number and the length of the funiculus, and is required for the development of the integuments. Required, with BEL1, for cytokinin-induced PIN1 expression in ovules. Involved in controlling stamen identity. May also regulate the morphology of lateral organs by repressing auxin production. This is Protein SPOROCYTELESS from Arabidopsis thaliana (Mouse-ear cress).